The sequence spans 406 residues: Tryptophan synthase beta chain (406 aa).

The residue at position 95 (Lys95) is an N6-(pyridoxal phosphate)lysine.

The protein belongs to the TrpB family. As to quaternary structure, tetramer of two alpha and two beta chains. Pyridoxal 5'-phosphate is required as a cofactor.

The enzyme catalyses (1S,2R)-1-C-(indol-3-yl)glycerol 3-phosphate + L-serine = D-glyceraldehyde 3-phosphate + L-tryptophan + H2O. It participates in amino-acid biosynthesis; L-tryptophan biosynthesis; L-tryptophan from chorismate: step 5/5. Its function is as follows. The beta subunit is responsible for the synthesis of L-tryptophan from indole and L-serine. The protein is Tryptophan synthase beta chain of Azotobacter vinelandii (strain DJ / ATCC BAA-1303).